The sequence spans 295 residues: uncharacterized protein (295 aa).

One can recognise a Sigma-54 factor interaction domain in the interval I4 to L233.

This is an uncharacterized protein from Pseudomonas sp. (strain NS671).